The sequence spans 1357 residues: DNA-directed RNA polymerase subunit beta (1357 aa).

Belongs to the RNA polymerase beta chain family. As to quaternary structure, the RNAP catalytic core consists of 2 alpha, 1 beta, 1 beta' and 1 omega subunit. When a sigma factor is associated with the core the holoenzyme is formed, which can initiate transcription.

It catalyses the reaction RNA(n) + a ribonucleoside 5'-triphosphate = RNA(n+1) + diphosphate. In terms of biological role, DNA-dependent RNA polymerase catalyzes the transcription of DNA into RNA using the four ribonucleoside triphosphates as substrates. The protein is DNA-directed RNA polymerase subunit beta of Hahella chejuensis (strain KCTC 2396).